The sequence spans 22 residues: Thylakoid lumenal 11 kDa protein (22 aa).

Positions 1 to 22 are disordered; sequence FKGGGPYGQGVTRGQDLSGKDF.

The protein to A.thaliana At2g44920.

The protein resides in the plastid. Its subcellular location is the chloroplast thylakoid lumen. This chain is Thylakoid lumenal 11 kDa protein, found in Spinacia oleracea (Spinach).